The chain runs to 526 residues: Cytochrome P450 monooxygenase 226 (526 aa).

A helical transmembrane segment spans residues 15–35 (FATSYAALTVAAVTLLAALLV). Asn219, Asn277, and Asn320 each carry an N-linked (GlcNAc...) asparagine glycan. A heme-binding site is contributed by Cys452.

The protein belongs to the cytochrome P450 family. Heme serves as cofactor.

It is found in the membrane. Its pathway is secondary metabolite biosynthesis. Functionally, cytochrome P450 monooxygenase that is able to use anthracene, carbazole and phenanthrene as substrates for oxidation. These multifunctional properties against a series of polycyclic aromatic hydrocarbons (PAHs) suggest that CYP226 would play important roles, at least in part, in fungal metabolic systems involved in xenobiotic detoxification. The chain is Cytochrome P450 monooxygenase 226 from Postia placenta (strain ATCC 44394 / Madison 698-R) (Brown rot fungus).